The chain runs to 214 residues: Corrinoid adenosyltransferase (214 aa).

50 to 56 (GKGKGKS) serves as a coordination point for ATP.

Belongs to the Cob(I)alamin adenosyltransferase family. Monomer. Requires Mn(2+) as cofactor.

It is found in the cytoplasm. It catalyses the reaction 2 cob(II)yrinate a,c diamide + reduced [electron-transfer flavoprotein] + 2 ATP = 2 adenosylcob(III)yrinate a,c-diamide + 2 triphosphate + oxidized [electron-transfer flavoprotein] + 3 H(+). The catalysed reaction is 2 cob(II)alamin + reduced [electron-transfer flavoprotein] + 2 ATP = 2 adenosylcob(III)alamin + 2 triphosphate + oxidized [electron-transfer flavoprotein] + 3 H(+). It functions in the pathway cofactor biosynthesis; adenosylcobalamin biosynthesis; adenosylcobalamin from cob(II)yrinate a,c-diamide: step 2/7. Required for both de novo synthesis of the corrin ring for the assimilation of exogenous corrinoids. Participates in the adenosylation of a variety of incomplete and complete corrinoids. The protein is Corrinoid adenosyltransferase (cobO) of Sinorhizobium sp.